A 3680-amino-acid polypeptide reads, in one-letter code: Dystrophin (3680 aa).

An actin-binding region spans residues 1 to 237 (MLWWEEVEDC…ILMYITSLFQ (237 aa)). 2 consecutive Calponin-homology (CH) domains span residues 15 to 119 (DVQK…LHWQ) and 134 to 240 (TNSE…QVLP). An ANK2- and ANK-3 binding region spans residues 63-72 (PKEKGSTRVH). Polar residues predominate over residues 310-323 (TSDPTRSPLPSQHL). The interval 310–332 (TSDPTRSPLPSQHLETPEDKSFG) is disordered. 24 Spectrin repeats span residues 340 to 448 (ANLD…NLHK), 449 to 557 (VLMD…LLQD), 560 to 668 (LKWQ…QISQ), 720 to 829 (EIRK…WLEY), 831 to 935 (NNII…ELQT), 944 to 1047 (RYQE…KLEE), 1050 to 1156 (AKLR…ALKG), 1159 to 1265 (DKTV…TLEE), 1268 to 1369 (ACWH…LLEQ), 1370 to 1465 (SIQS…LFQK), 1470 to 1570 (EQRL…QLEK), 1573 to 1678 (KLSR…LLLE), 1681 to 1780 (KHME…KASI), 1781 to 1876 (PLKE…KALE), 1879 to 1981 (HQWY…TVHE), 1994 to 2103 (EISY…RFDR), 2106 to 2210 (EKWR…RLEE), 2213 to 2320 (NILS…EIEA), 2321 to 2418 (HVKD…LRAK), 2470 to 2572 (FNRA…QLTE), 2575 to 2681 (KDST…ALEE), 2684 to 2797 (RLLQ…HLEA), 2803 to 2925 (KRLH…RKID), and 2930 to 3035 (RLQE…QLHE). Residues 1418–1915 (DLTSHEISLE…PEPRDERKIK (498 aa)) are interaction with SYNM. The region spanning 3050–3083 (TSVQGPWERAISPNKVPYYINHETQTTCWDHPKM) is the WW domain. Positions 3053–3403 (QGPWERAISP…TVLEGDNMET (351 aa)) are interaction with SYNM. A ZZ-type; degenerate zinc finger spans residues 3303 to 3359 (KHQAKCNICKECPIIGFRYRSLKHFNYDICQSCFFSGRVAKGHKMHYPMVEYCTPTT). The Zn(2+) site is built by C3308, C3311, C3332, and C3335. The tract at residues 3461 to 3513 (DDEHLLIQHYWRSLNQESPLSQPRSPAQILISLESEERGELERILADLEGRNR) is binds to SNTB1. Phosphoserine occurs at positions 3478, 3485, and 3495. Disordered stretches follow at residues 3524-3549 (QQHEHKGLSPLPSPPEMMPTSPQSPR) and 3595-3680 (PQAE…EDTM). Composition is skewed to polar residues over residues 3602–3621 (NGTTVSSPSTSLQRSDSSQP) and 3658–3668 (LNHSFPSSRGR). Residues S3607, S3608, S3612, S3618, S3619, and S3661 each carry the phosphoserine modification.

Interacts with SYNM. Interacts with the syntrophins SNTG1 and SNTG2. Interacts with KRT19. Component of the dystrophin-associated glycoprotein complex which is composed of three subcomplexes: a cytoplasmic complex comprised of DMD (or UTRN), DTNA and a number of syntrophins, such as SNTB1, SNTB2, SNTG1 and SNTG2, the transmembrane dystroglycan complex, and the sarcoglycan-sarcospan complex. Interacts with DAG1 (betaDAG1) with DMD; the interaction is inhibited by phosphorylation on the PPXY motif of DAG1. Interacts with SYNM; SNTA1 and SNTB1. Interacts with CMYA5. Directly interacts with ANK2 and ANK3; these interactions do not interfere with betaDAG1-binding and are necessary for proper localization in muscle cells. Identified in a dystroglycan complex that contains at least PRX, DRP2, UTRN, DMD and DAG1. Interacts with DTNB. Interacts with PGM5; the interaction is direct. Interacts with NOS1; localizes NOS1 to sarcolemma in muscle cells.

The protein localises to the cell membrane. Its subcellular location is the sarcolemma. It localises to the cytoplasm. It is found in the cytoskeleton. The protein resides in the postsynaptic cell membrane. Anchors the extracellular matrix to the cytoskeleton via F-actin. Ligand for dystroglycan. Component of the dystrophin-associated glycoprotein complex which accumulates at the neuromuscular junction (NMJ) and at a variety of synapses in the peripheral and central nervous systems and has a structural function in stabilizing the sarcolemma. Also implicated in signaling events and synaptic transmission. The protein is Dystrophin (DMD) of Canis lupus familiaris (Dog).